Here is a 194-residue protein sequence, read N- to C-terminus: UPF0301 protein CBU_2093 (194 aa).

The protein belongs to the UPF0301 (AlgH) family.

In Coxiella burnetii (strain RSA 493 / Nine Mile phase I), this protein is UPF0301 protein CBU_2093.